The chain runs to 359 residues: tRNA N6-adenosine threonylcarbamoyltransferase (359 aa).

Fe cation-binding residues include histidine 115 and histidine 119. Substrate-binding positions include 137-141 (LVSGG), aspartate 170, glycine 183, and asparagine 283. Aspartate 311 contacts Fe cation. Positions 328–359 (APDSLDIAPRSRWPLDEKSAPVFGTGRRGAKA) are disordered.

Belongs to the KAE1 / TsaD family. Fe(2+) is required as a cofactor.

The protein localises to the cytoplasm. The catalysed reaction is L-threonylcarbamoyladenylate + adenosine(37) in tRNA = N(6)-L-threonylcarbamoyladenosine(37) in tRNA + AMP + H(+). Required for the formation of a threonylcarbamoyl group on adenosine at position 37 (t(6)A37) in tRNAs that read codons beginning with adenine. Is involved in the transfer of the threonylcarbamoyl moiety of threonylcarbamoyl-AMP (TC-AMP) to the N6 group of A37, together with TsaE and TsaB. TsaD likely plays a direct catalytic role in this reaction. This chain is tRNA N6-adenosine threonylcarbamoyltransferase, found in Brucella abortus (strain S19).